Reading from the N-terminus, the 337-residue chain is MRAVLLPGSGEQPTAFCYQVNGSCPRTVHPLAIQVVIYLACAVGVLITVLGNLFVVFAVSYFKVLHTPTNFLLLSLALADMLLGLLVLPLSTVRSVESCWFFGDFLCRLHTYLDTLFCLTSIFHLCFISIDRHCAICDPLLYPSKFTVRTALRYIVAGWGIPAAYTAFFLYTDVVERALSQWLEEMPCVGSCQLLFNKFWGWLNFPAFFVPCLIMISLYLKIFVVATRQAQQIRTLSQSLAGAVKRERKAAKTLGIAVGIYLVCWLPFTVDTLVDSLLNFITPPLVFDIFIWFAYFNSACNPIIYVFSYRWFRKALKLLLSREIFSPRTPTVDLYHD.

Residues 1 to 38 (MRAVLLPGSGEQPTAFCYQVNGSCPRTVHPLAIQVVIY) are Extracellular-facing. Residue asparagine 21 is glycosylated (N-linked (GlcNAc...) asparagine). 2 disulfide bridges follow: cysteine 24–cysteine 188 and cysteine 99–cysteine 192. Residues 39–59 (LACAVGVLITVLGNLFVVFAV) traverse the membrane as a helical segment. Topologically, residues 60–70 (SYFKVLHTPTN) are cytoplasmic. A helical transmembrane segment spans residues 71–91 (FLLLSLALADMLLGLLVLPLS). Topologically, residues 92–109 (TVRSVESCWFFGDFLCRL) are extracellular. Residues 110-130 (HTYLDTLFCLTSIFHLCFISI) traverse the membrane as a helical segment. Residues 131-154 (DRHCAICDPLLYPSKFTVRTALRY) are Cytoplasmic-facing. The chain crosses the membrane as a helical span at residues 155 to 175 (IVAGWGIPAAYTAFFLYTDVV). The tract at residues 176-189 (ERALSQWLEEMPCV) is extracellular Loop 2 (ECL2). Residues 176-204 (ERALSQWLEEMPCVGSCQLLFNKFWGWLN) are Extracellular-facing. Residues 205-225 (FPAFFVPCLIMISLYLKIFVV) traverse the membrane as a helical segment. Residues 226-253 (ATRQAQQIRTLSQSLAGAVKRERKAAKT) lie on the Cytoplasmic side of the membrane. A helical membrane pass occupies residues 254 to 274 (LGIAVGIYLVCWLPFTVDTLV). The Extracellular portion of the chain corresponds to 275–284 (DSLLNFITPP). The helical transmembrane segment at 285–307 (LVFDIFIWFAYFNSACNPIIYVF) threads the bilayer. The Cytoplasmic portion of the chain corresponds to 308 to 337 (SYRWFRKALKLLLSREIFSPRTPTVDLYHD).

Belongs to the G-protein coupled receptor 1 family. In terms of tissue distribution, specifically expressed in neurons of the olfactory epithelium, to discrete glomeruli predominantly localized to a confined bulb region. Present in the dorsal area of the main olfactory epithelium. Also present in the limbic brain areas receiving projection from the olfactory system and involved in the regulation of emotions. Also expressed in some brain regions outside the olfactory epithelium, such as the hippocampus, cerebellum, cortex, raphe nuclei, hypothalamus, and habenula.

The protein localises to the cell membrane. Inhibited by 1-[(5,5- diphenyloxolan-2-yl)methyl]-4-(2-methoxyphenyl)piperazine and N-[(2,2-diphenyl-1,3-dioxolan-4-yl)methyl]-2-(2- methoxyphenoxy)ethan-1-amine small molecules. Functionally, olfactory receptor specific for trimethylamine, a trace amine enriched in the urine of male mice, playing a role in social behavior. Also activated by N-methylpiperidine. Trimethylamine is present at high concentration in the urine of male mice after puberty and acts as an attractant. Trimethylamine-binding causes a conformation change that triggers signaling via G(s)-class of G alpha proteins (GNAL or GNAS). Also required to provide olfactory input into limbic brain areas to regulate emotional behaviors likely via modulation of the serotonin system. The chain is Trace amine-associated receptor 5 from Mus musculus (Mouse).